A 358-amino-acid chain; its full sequence is Protein SRG1 (358 aa).

The 101-residue stretch at 209–309 folds into the Fe2OG dioxygenase domain; the sequence is SVQSMRMNYY…RLSIATFHNV (101 aa). H233, D235, and H290 together coordinate Fe cation.

This sequence belongs to the iron/ascorbate-dependent oxidoreductase family. As to expression, low expression in roots and leaves.

This Arabidopsis thaliana (Mouse-ear cress) protein is Protein SRG1 (SRG1).